The sequence spans 281 residues: Phosphatidylglycerol--prolipoprotein diacylglyceryl transferase (281 aa).

Helical transmembrane passes span 11–31, 57–77, 89–109, 121–141, 194–214, 222–242, and 255–275; these read IIFTIGPVSARWYGFMYVISF, LLYSIFLGSCIGGRIGYIIFY, VFYIWEGGMSFHGGLIGAIIV, ILEISDFITPLIPFGLGAGRI, PTQLYEFFLEGILLFFIIYFF, GSISGLFLIFYGLFRIFIEFF, and IITMGQILSLPMIIAGLIIMY. Residue R140 coordinates a 1,2-diacyl-sn-glycero-3-phospho-(1'-sn-glycerol).

It belongs to the Lgt family.

It localises to the cell inner membrane. The enzyme catalyses L-cysteinyl-[prolipoprotein] + a 1,2-diacyl-sn-glycero-3-phospho-(1'-sn-glycerol) = an S-1,2-diacyl-sn-glyceryl-L-cysteinyl-[prolipoprotein] + sn-glycerol 1-phosphate + H(+). The protein operates within protein modification; lipoprotein biosynthesis (diacylglyceryl transfer). Functionally, catalyzes the transfer of the diacylglyceryl group from phosphatidylglycerol to the sulfhydryl group of the N-terminal cysteine of a prolipoprotein, the first step in the formation of mature lipoproteins. In Buchnera aphidicola subsp. Acyrthosiphon pisum (strain 5A), this protein is Phosphatidylglycerol--prolipoprotein diacylglyceryl transferase.